Here is a 206-residue protein sequence, read N- to C-terminus: Putative amino-acid transporter YggA (206 aa).

6 helical membrane passes run 1–21 (MFAT…PIGA), 37–57 (LLAA…GVFG), 65–85 (SPIG…WFGI), 116–136 (LGVT…LGSF), 148–168 (FAAG…FGAA), and 185–205 (TIVG…ALLA).

The protein belongs to the LysE/ArgO transporter (TC 2.A.75) family.

The protein localises to the cell membrane. The sequence is that of Putative amino-acid transporter YggA (yggA) from Aeromonas salmonicida.